Reading from the N-terminus, the 226-residue chain is UPF0758 protein SPD_0975 (226 aa).

One can recognise an MPN domain in the interval 103-225 (SILSSQKLAK…YFSYREKTDL (123 aa)). Positions 174, 176, and 187 each coordinate Zn(2+). A JAMM motif motif is present at residues 174–187 (HNHPSGAVAPSQND).

The protein belongs to the UPF0758 family.

The sequence is that of UPF0758 protein SPD_0975 from Streptococcus pneumoniae serotype 2 (strain D39 / NCTC 7466).